Consider the following 163-residue polypeptide: Large ribosomal subunit protein uL11 (163 aa).

Positions 1 to 26 are disordered; that stretch reads MAETIEVLVAGGQADPGPPLGPELGP.

Belongs to the universal ribosomal protein uL11 family. As to quaternary structure, part of the ribosomal stalk of the 50S ribosomal subunit. Interacts with L10 and the large rRNA to form the base of the stalk. L10 forms an elongated spine to which L12 dimers bind in a sequential fashion forming a multimeric L10(L12)X complex.

Functionally, forms part of the ribosomal stalk which helps the ribosome interact with GTP-bound translation factors. The protein is Large ribosomal subunit protein uL11 of Halobacterium salinarum (strain ATCC 29341 / DSM 671 / R1).